The sequence spans 879 residues: Translation initiation factor IF-2 (879 aa).

Residues 48–261 (EAFPPPPEPA…RPHKSKKQRR (214 aa)) form a disordered region. A compositionally biased stretch (low complexity) spans 82-111 (PAADAAAPPAVTTPPSAAPAGATTSAPSDA). Pro residues-rich tracts occupy residues 119 to 142 (PPRP…PSGP), 152 to 163 (SPMPRPMPPRPV), and 173 to 197 (PGIP…PPRP). A compositionally biased stretch (low complexity) spans 198–213 (AAGRAAPGRGAPIRLP). Over residues 228-246 (PGVGGRGRGAPGGAFGRGP) the composition is skewed to gly residues. The segment covering 251–260 (SRPHKSKKQR) has biased composition (basic residues). The tr-type G domain occupies 372-543 (PRPPVVTVMG…AILLTADAAL (172 aa)). Residues 381 to 388 (GHVDHGKT) are G1. 381–388 (GHVDHGKT) is a binding site for GTP. A G2 region spans residues 406–410 (GITQH). The G3 stretch occupies residues 431–434 (DTPG). GTP is bound by residues 431-435 (DTPGH) and 485-488 (NKID). A G4 region spans residues 485–488 (NKID). Positions 521-523 (SAL) are G5.

The protein belongs to the TRAFAC class translation factor GTPase superfamily. Classic translation factor GTPase family. IF-2 subfamily.

The protein localises to the cytoplasm. In terms of biological role, one of the essential components for the initiation of protein synthesis. Protects formylmethionyl-tRNA from spontaneous hydrolysis and promotes its binding to the 30S ribosomal subunits. Also involved in the hydrolysis of GTP during the formation of the 70S ribosomal complex. This is Translation initiation factor IF-2 from Acidothermus cellulolyticus (strain ATCC 43068 / DSM 8971 / 11B).